The chain runs to 179 residues: Large ribosomal subunit protein uL5 (179 aa).

The protein belongs to the universal ribosomal protein uL5 family. Part of the 50S ribosomal subunit; part of the 5S rRNA/L5/L18/L25 subcomplex. Contacts the 5S rRNA and the P site tRNA. Forms a bridge to the 30S subunit in the 70S ribosome.

Functionally, this is one of the proteins that bind and probably mediate the attachment of the 5S RNA into the large ribosomal subunit, where it forms part of the central protuberance. In the 70S ribosome it contacts protein S13 of the 30S subunit (bridge B1b), connecting the 2 subunits; this bridge is implicated in subunit movement. Contacts the P site tRNA; the 5S rRNA and some of its associated proteins might help stabilize positioning of ribosome-bound tRNAs. The polypeptide is Large ribosomal subunit protein uL5 (Agathobacter rectalis (strain ATCC 33656 / DSM 3377 / JCM 17463 / KCTC 5835 / VPI 0990) (Eubacterium rectale)).